Consider the following 525-residue polypeptide: Ribonuclease III domain-containing protein RNC1, chloroplastic (525 aa).

A chloroplast-targeting transit peptide spans 1-28 (MGPPAMAFQALTLTPLPFSLHSSSRRVR). 2 consecutive RNase III domains span residues 125 to 271 (LLEA…LCFG) and 403 to 503 (EHPR…CVYG).

Interacts with RNA. Part of large ribonucleo-protein particles that contain CAF1 and/or CAF2.

It is found in the plastid. Its subcellular location is the chloroplast stroma. Binds specific group II introns in chloroplasts and facilitates their splicing. Acts on both subgroup IIA and subgroup IIB introns. The substrates of the subgroup II also require the CRM domain proteins CAF1 or CAF2. Binds both single-stranded and double-stranded RNA non-specifically, but lacks endonuclease activity. Required for plastid ribosome biogenesis. In Zea mays (Maize), this protein is Ribonuclease III domain-containing protein RNC1, chloroplastic.